A 190-amino-acid polypeptide reads, in one-letter code: Protein A52 (190 aa).

The protein belongs to the orthopoxvirus A52R protein family. As to quaternary structure, interacts with host TRAF6 and IRAK2.

Bcl-2-like protein which targets host toll-like receptor signaling complexes to suppress innate immune response. Interacts with host TRAF6 to activate p38 and subsequently induce the expression of several cytokines such as IL-10. Also associates with host IRAK2 to inhibit NF-kappa-B signaling. The polypeptide is Protein A52 (Homo sapiens (Human)).